A 197-amino-acid polypeptide reads, in one-letter code: Adenylate kinase (197 aa).

16–21 provides a ligand contact to ATP; the sequence is GAGKGT. The segment at 36-65 is NMP; that stretch reads STGDILRDHVARGTELGQQVKPILDAGHLV. Residues Thr37, Arg42, 63 to 65, 90 to 93, and Gln97 each bind AMP; these read HLV and GFPR. Residues 131–147 are LID; it reads ERGNQAQARGEAVRSDD. Arg132 contributes to the ATP binding site. AMP-binding residues include Arg144 and Arg155. Gly183 provides a ligand contact to ATP.

It belongs to the adenylate kinase family. Monomer.

It localises to the cytoplasm. It carries out the reaction AMP + ATP = 2 ADP. It functions in the pathway purine metabolism; AMP biosynthesis via salvage pathway; AMP from ADP: step 1/1. Functionally, catalyzes the reversible transfer of the terminal phosphate group between ATP and AMP. Plays an important role in cellular energy homeostasis and in adenine nucleotide metabolism. In Deinococcus deserti (strain DSM 17065 / CIP 109153 / LMG 22923 / VCD115), this protein is Adenylate kinase.